The chain runs to 140 residues: 3-hydroxyacyl-[acyl-carrier-protein] dehydratase FabZ (140 aa).

The active site involves His-47.

It belongs to the thioester dehydratase family. FabZ subfamily.

The protein localises to the cytoplasm. The enzyme catalyses a (3R)-hydroxyacyl-[ACP] = a (2E)-enoyl-[ACP] + H2O. In terms of biological role, involved in unsaturated fatty acids biosynthesis. Catalyzes the dehydration of short chain beta-hydroxyacyl-ACPs and long chain saturated and unsaturated beta-hydroxyacyl-ACPs. The sequence is that of 3-hydroxyacyl-[acyl-carrier-protein] dehydratase FabZ from Streptococcus pneumoniae serotype 4 (strain ATCC BAA-334 / TIGR4).